A 446-amino-acid polypeptide reads, in one-letter code: Tubulin beta-6 chain (446 aa).

The MREI motif signature appears at 1–4 (MREI). GTP-binding residues include Gln11, Glu69, Ser138, Gly142, Thr143, Gly144, Asn204, and Asn226. Glu69 lines the Mg(2+) pocket. The disordered stretch occupies residues 419–446 (VSEYQQYQDATADVEEYEEAEASPEKET). A compositionally biased stretch (acidic residues) spans 430-440 (ADVEEYEEAEA).

The protein belongs to the tubulin family. Dimer of alpha and beta chains. A typical microtubule is a hollow water-filled tube with an outer diameter of 25 nm and an inner diameter of 15 nM. Alpha-beta heterodimers associate head-to-tail to form protofilaments running lengthwise along the microtubule wall with the beta-tubulin subunit facing the microtubule plus end conferring a structural polarity. Microtubules usually have 13 protofilaments but different protofilament numbers can be found in some organisms and specialized cells. Requires Mg(2+) as cofactor. Some glutamate residues at the C-terminus are polyglycylated, resulting in polyglycine chains on the gamma-carboxyl group. Glycylation is mainly limited to tubulin incorporated into axonemes (cilia and flagella) whereas glutamylation is prevalent in neuronal cells, centrioles, axonemes, and the mitotic spindle. Both modifications can coexist on the same protein on adjacent residues, and lowering polyglycylation levels increases polyglutamylation, and reciprocally. The precise function of polyglycylation is still unclear. In terms of processing, some glutamate residues at the C-terminus are polyglutamylated, resulting in polyglutamate chains on the gamma-carboxyl group. Polyglutamylation plays a key role in microtubule severing by spastin (SPAST). SPAST preferentially recognizes and acts on microtubules decorated with short polyglutamate tails: severing activity by SPAST increases as the number of glutamates per tubulin rises from one to eight, but decreases beyond this glutamylation threshold. Highly expressed in bone marrow.

Its subcellular location is the cytoplasm. It is found in the cytoskeleton. In terms of biological role, tubulin is the major constituent of microtubules, a cylinder consisting of laterally associated linear protofilaments composed of alpha- and beta-tubulin heterodimers. Microtubules grow by the addition of GTP-tubulin dimers to the microtubule end, where a stabilizing cap forms. Below the cap, tubulin dimers are in GDP-bound state, owing to GTPase activity of alpha-tubulin. The sequence is that of Tubulin beta-6 chain from Gallus gallus (Chicken).